The sequence spans 204 residues: UPF0134 protein MPN_655 (204 aa).

Residues 46–132 form a disordered region; it reads EVENKPKIPI…FNEFKDSNNQ (87 aa). Pro residues predominate over residues 64 to 80; sequence SPKPLKPPKPPKPPKGP. Positions 117–132 are enriched in basic and acidic residues; that stretch reads YVTRKEFNEFKDSNNQ.

Belongs to the UPF0134 family.

In Mycoplasma pneumoniae (strain ATCC 29342 / M129 / Subtype 1) (Mycoplasmoides pneumoniae), this protein is UPF0134 protein MPN_655.